The primary structure comprises 296 residues: NADH-cytochrome b5 reductase 2 (296 aa).

The chain crosses the membrane as a helical span at residues 2-24 (LVALAAIGVTVLLFLIKALGSGA). One can recognise an FAD-binding FR-type domain in the interval 35–147 (NAKYPLPLIE…RGPNGLLVYK (113 aa)). FAD is bound by residues 127–142 (DSLK…GPNG) and 166–201 (VAKH…KCYL).

This sequence belongs to the flavoprotein pyridine nucleotide cytochrome reductase family. FAD is required as a cofactor.

The protein localises to the membrane. It catalyses the reaction 2 Fe(III)-[cytochrome b5] + NADH = 2 Fe(II)-[cytochrome b5] + NAD(+) + H(+). NADH-cytochrome b5 reductases are involved in desaturation and elongation of fatty acids, cholesterol biosynthesis and drug metabolism. The protein is NADH-cytochrome b5 reductase 2 (cyb5r2) of Xenopus laevis (African clawed frog).